The chain runs to 92 residues: Putative pterin-4-alpha-carbinolamine dehydratase (92 aa).

This sequence belongs to the pterin-4-alpha-carbinolamine dehydratase family.

The enzyme catalyses (4aS,6R)-4a-hydroxy-L-erythro-5,6,7,8-tetrahydrobiopterin = (6R)-L-erythro-6,7-dihydrobiopterin + H2O. This chain is Putative pterin-4-alpha-carbinolamine dehydratase, found in Picosynechococcus sp. (strain ATCC 27264 / PCC 7002 / PR-6) (Agmenellum quadruplicatum).